We begin with the raw amino-acid sequence, 387 residues long: MVSDGEFTRTQIFGTVFEITNRYTDLNPVGMGAFGLVCSAIDKLTGQNVAVKKIMKPFSTSVLAKRTYRELKLLKHLRHENLITLDDIFLSPLEDIYFVTELQGTDLHRLLTSRPLEKQFIQYFTYQILRGLKYVHSAGVIHRDLKPSNILINENCDLKICDFGLARIQDPQMTGYVSTRYYRAPEIMLTWQKYDTEVDLWSVGCILSEMIEGKPLFPGKDHVHQFSIITELLGSPPPDVIETICSENTLRFVQSLPHRDPIPFSERFAQCSHVEPEAIDLLAKMLIFDPKKRISALDALSHPYMEPYHDPTDEPVCEVKFDWSFNDADLPVDTWRVMMYSEILDFHQIIGAGANGTTQEQMAQIQQEGIQAPSSQYQQTNQEQKVE.

In terms of domain architecture, Protein kinase spans 23–305 (YTDLNPVGMG…ALDALSHPYM (283 aa)). ATP is bound by residues 29–37 (VGMGAFGLV) and lysine 52. Residue aspartate 144 is the Proton acceptor of the active site. Threonine 174 bears the Phosphothreonine mark. The TXY motif lies at 174–176 (TGY). Tyrosine 176 is modified (phosphotyrosine). A disordered region spans residues 360–387 (EQMAQIQQEGIQAPSSQYQQTNQEQKVE).

The protein belongs to the protein kinase superfamily. Ser/Thr protein kinase family. MAP kinase subfamily. HOG1 sub-subfamily. Requires Mg(2+) as cofactor. Post-translationally, dually phosphorylated on Thr-174 and Tyr-176, which activates the enzyme. Phosphorylated in response of osmotic stress, oxidative stress and UV stress, but not heat stress.

Its subcellular location is the cytoplasm. The protein resides in the nucleus. The catalysed reaction is L-seryl-[protein] + ATP = O-phospho-L-seryl-[protein] + ADP + H(+). The enzyme catalyses L-threonyl-[protein] + ATP = O-phospho-L-threonyl-[protein] + ADP + H(+). Activated by tyrosine and threonine phosphorylation. Its function is as follows. Proline-directed serine/threonine-protein kinase involved in a signal transduction pathway that is activated by changes in the osmolarity of the extracellular environment. Controls osmotic regulation of transcription of target genes. The polypeptide is Mitogen-activated protein kinase HOG1 (HOG1) (Debaryomyces hansenii (strain ATCC 36239 / CBS 767 / BCRC 21394 / JCM 1990 / NBRC 0083 / IGC 2968) (Yeast)).